The following is a 423-amino-acid chain: 3-phosphoshikimate 1-carboxyvinyltransferase (423 aa).

Positions 21, 22, and 26 each coordinate 3-phosphoshikimate. K21 is a phosphoenolpyruvate binding site. Positions 93 and 123 each coordinate phosphoenolpyruvate. 6 residues coordinate 3-phosphoshikimate: S168, S169, Q170, S196, D311, and K338. Residue Q170 participates in phosphoenolpyruvate binding. Catalysis depends on D311, which acts as the Proton acceptor. Residues R342, R383, and K408 each contribute to the phosphoenolpyruvate site.

It belongs to the EPSP synthase family. Monomer.

Its subcellular location is the cytoplasm. It catalyses the reaction 3-phosphoshikimate + phosphoenolpyruvate = 5-O-(1-carboxyvinyl)-3-phosphoshikimate + phosphate. The protein operates within metabolic intermediate biosynthesis; chorismate biosynthesis. Its function is as follows. Catalyzes the transfer of the enolpyruvyl moiety of phosphoenolpyruvate (PEP) to the 5-hydroxyl of shikimate-3-phosphate (S3P) to produce enolpyruvyl shikimate-3-phosphate and inorganic phosphate. The sequence is that of 3-phosphoshikimate 1-carboxyvinyltransferase from Methanosphaerula palustris (strain ATCC BAA-1556 / DSM 19958 / E1-9c).